The chain runs to 94 residues: Co-chaperonin GroES (94 aa).

Belongs to the GroES chaperonin family. In terms of assembly, heptamer of 7 subunits arranged in a ring. Interacts with the chaperonin GroEL.

It is found in the cytoplasm. Together with the chaperonin GroEL, plays an essential role in assisting protein folding. The GroEL-GroES system forms a nano-cage that allows encapsulation of the non-native substrate proteins and provides a physical environment optimized to promote and accelerate protein folding. GroES binds to the apical surface of the GroEL ring, thereby capping the opening of the GroEL channel. The polypeptide is Co-chaperonin GroES (Streptococcus pneumoniae (strain ATCC 700669 / Spain 23F-1)).